The following is a 221-amino-acid chain: Tumor protein p53-inducible nuclear protein 2 (221 aa).

Residues 26–41 carry the LIR motif; sequence VSEEDEVDGWLIIDLQ. Residues 41 to 68 are disordered; sequence QDSYTAPPDPGASPAPAGRPPPAPSLMD. Pro residues predominate over residues 47-64; sequence PPDPGASPAPAGRPPPAP. Ser-136 carries the post-translational modification Phosphoserine. Residues 177 to 210 are disordered; it reads RQRAERHTLSAKVLQRQNRARESRSRRPKHQGSF.

Interacts with VMP1, GABARAP, GABARAPL1, GABARAPL2, MAP1LC3A, MAP1LC3B, MAP1LC3C and THRA.

Its subcellular location is the cytoplasm. The protein resides in the cytosol. It localises to the nucleus. It is found in the PML body. The protein localises to the cytoplasmic vesicle. Its subcellular location is the autophagosome. Dual regulator of transcription and autophagy. Positively regulates autophagy and is required for autophagosome formation and processing. May act as a scaffold protein that recruits MAP1LC3A, GABARAP and GABARAPL2 and brings them to the autophagosome membrane by interacting with VMP1 where, in cooperation with the BECN1-PI3-kinase class III complex, they trigger autophagosome development. Acts as a transcriptional activator of THRA. In Mus musculus (Mouse), this protein is Tumor protein p53-inducible nuclear protein 2 (Tp53inp2).